A 3112-amino-acid chain; its full sequence is Genome polyprotein (3112 aa).

Residues 234 to 383 enclose the Peptidase S30 domain; that stretch reads KLTQRRANKI…PDCLEGLTYY (150 aa). Catalysis depends on for P1 proteinase activity residues His286, Asp301, and Ser333. The 122-residue stretch at 729 to 850 folds into the Peptidase C6 domain; that stretch reads TLVPKSGFCY…IETFKDYRIG (122 aa). Active-site for helper component proteinase activity residues include Cys737 and His809. One can recognise a Helicase ATP-binding domain in the interval 1278-1429; it reads NIATGAGNEF…CVPTNHKVDV (152 aa). 1291 to 1298 is a binding site for ATP; that stretch reads GDVGSGKS. A DECH box motif is present at residues 1379–1382; the sequence is DECH. The 184-residue stretch at 1444–1627 folds into the Helicase C-terminal domain; that stretch reads SIDSHAEGLR…EVNFVTREQV (184 aa). The Peptidase C4 domain occupies 2096–2311; sequence DDNYVPHSRC…ISWKGVPTNM (216 aa). Catalysis depends on for nuclear inclusion protein A activity residues His2140, Asp2174, and Cys2243. The RdRp catalytic domain occupies 2569–2687; it reads WKFIDADGSR…NAPQGVCETI (119 aa). Residues 2818-2867 form a disordered region; the sequence is HSGADQSGVVKDQTGDKAEGSGTKTEDPPNQTTDPVNNPSNGGNKDAPQN. The span at 2830 to 2844 shows a compositional bias: basic and acidic residues; sequence QTGDKAEGSGTKTED. Residues 2845 to 2867 show a composition bias toward polar residues; the sequence is PPNQTTDPVNNPSNGGNKDAPQN.

The protein belongs to the potyviridae genome polyprotein family. Post-translationally, VPg is uridylylated by the polymerase and is covalently attached to the 5'-end of the genomic RNA. This uridylylated form acts as a nucleotide-peptide primer for the polymerase. In terms of processing, genome polyprotein of potyviruses undergoes post-translational proteolytic processing by the main proteinase NIa-pro resulting in the production of at least ten individual proteins. The P1 proteinase and the HC-pro cleave only their respective C-termini autocatalytically. 6K1 is essential for proper proteolytic separation of P3 from CI.

The protein localises to the host cytoplasmic vesicle. It is found in the virion. The enzyme catalyses RNA(n) + a ribonucleoside 5'-triphosphate = RNA(n+1) + diphosphate. It catalyses the reaction Hydrolyzes glutaminyl bonds, and activity is further restricted by preferences for the amino acids in P6 - P1' that vary with the species of potyvirus, e.g. Glu-Xaa-Xaa-Tyr-Xaa-Gln-|-(Ser or Gly) for the enzyme from tobacco etch virus. The natural substrate is the viral polyprotein, but other proteins and oligopeptides containing the appropriate consensus sequence are also cleaved.. It carries out the reaction Hydrolyzes a Gly-|-Gly bond at its own C-terminus, commonly in the sequence -Tyr-Xaa-Val-Gly-|-Gly, in the processing of the potyviral polyprotein.. Its function is as follows. Required for aphid transmission and also has proteolytic activity. Only cleaves a Gly-Gly dipeptide at its own C-terminus. Interacts with virions and aphid stylets. Acts as a suppressor of RNA-mediated gene silencing, also known as post-transcriptional gene silencing (PTGS), a mechanism of plant viral defense that limits the accumulation of viral RNAs. May have RNA-binding activity. Has helicase activity. It may be involved in replication. Functionally, indispensable for virus replication. In terms of biological role, mediates the cap-independent, EIF4E-dependent translation of viral genomic RNAs. Binds to the cap-binding site of host EIF4E and thus interferes with the host EIF4E-dependent mRNA export and translation. VPg-RNA directly binds EIF4E and is a template for transcription. Also forms trimeric complexes with EIF4E-EIF4G, which are templates for translation. Its function is as follows. Has RNA-binding and proteolytic activities. An RNA-dependent RNA polymerase that plays an essential role in the virus replication. Functionally, involved in aphid transmission, cell-to-cell and systemis movement, encapsidation of the viral RNA and in the regulation of viral RNA amplification. This is Genome polyprotein from Triticum aestivum (Wheat).